We begin with the raw amino-acid sequence, 211 residues long: BAG family molecular chaperone regulator 2 (211 aa).

Alanine 2 bears the N-acetylalanine mark. Serine 20, serine 31, and serine 73 each carry phosphoserine. A coiled-coil region spans residues 20–61; the sequence is SMADRSSRLLESLDQLELRVEALREAATAVEQEKEILLEMIH. The region spanning 109 to 189 is the BAG domain; the sequence is SLKHATRIID…NIENSDKAIK (81 aa).

In terms of assembly, binds to the ATPase domain of HSP/HSC70 chaperones. May interact with NWD1. Interacts with HSPA1A (via NBD), HSPA1B (via NBD) and HSPA8. May interact with DNJC9; the interaction seems to be histone-dependent.

In terms of biological role, co-chaperone for HSP70 and HSC70 chaperone proteins. Acts as a nucleotide-exchange factor (NEF) promoting the release of ADP from the HSP70 and HSC70 proteins thereby triggering client/substrate protein release. The chain is BAG family molecular chaperone regulator 2 (BAG2) from Homo sapiens (Human).